Here is a 235-residue protein sequence, read N- to C-terminus: Exosome complex component Rrp4 (235 aa).

Residues G63–K137 enclose the S1 motif domain. The region spanning G147–I203 is the KH domain.

Belongs to the RRP4 family. In terms of assembly, component of the archaeal exosome complex. Forms a trimer of Rrp4 and/or Csl4 subunits. The trimer associates with a hexameric ring-like arrangement composed of 3 Rrp41-Rrp42 heterodimers.

Its subcellular location is the cytoplasm. In terms of biological role, non-catalytic component of the exosome, which is a complex involved in RNA degradation. Increases the RNA binding and the efficiency of RNA degradation. Confers strong poly(A) specificity to the exosome. The protein is Exosome complex component Rrp4 of Pyrobaculum aerophilum (strain ATCC 51768 / DSM 7523 / JCM 9630 / CIP 104966 / NBRC 100827 / IM2).